Here is a 415-residue protein sequence, read N- to C-terminus: Mitochondrial distribution and morphology protein 12 (415 aa).

Residues 1-402 enclose the SMP-LTD domain; it reads MSFDINWSEL…WPSWVCFDLN (402 aa). The disordered stretch occupies residues 53-146; sequence EITIRHIGDP…PPLTDLRRSR (94 aa). 2 stretches are compositionally biased toward acidic residues: residues 62–75 and 92–103; these read PFDD…DDDE and NSSDDDEDDEYD.

It belongs to the MDM12 family. Component of the ER-mitochondria encounter structure (ERMES) or MDM complex, composed of MMM1, MDM10, MDM12 and MDM34. An MMM1 homodimer associates with one molecule of MDM12 on each side in a pairwise head-to-tail manner, and the SMP-LTD domains of MMM1 and MDM12 generate a continuous hydrophobic tunnel for phospholipid trafficking.

The protein resides in the mitochondrion outer membrane. It localises to the endoplasmic reticulum membrane. Component of the ERMES/MDM complex, which serves as a molecular tether to connect the endoplasmic reticulum (ER) and mitochondria. Components of this complex are involved in the control of mitochondrial shape and protein biogenesis, and function in nonvesicular lipid trafficking between the ER and mitochondria. MDM12 is required for the interaction of the ER-resident membrane protein MMM1 and the outer mitochondrial membrane-resident beta-barrel protein MDM10. The MDM12-MMM1 subcomplex functions in the major beta-barrel assembly pathway that is responsible for biogenesis of all mitochondrial outer membrane beta-barrel proteins, and acts in a late step after the SAM complex. The MDM10-MDM12-MMM1 subcomplex further acts in the TOM40-specific pathway after the action of the MDM12-MMM1 complex. Essential for establishing and maintaining the structure of mitochondria and maintenance of mtDNA nucleoids. This chain is Mitochondrial distribution and morphology protein 12, found in Debaryomyces hansenii (strain ATCC 36239 / CBS 767 / BCRC 21394 / JCM 1990 / NBRC 0083 / IGC 2968) (Yeast).